We begin with the raw amino-acid sequence, 332 residues long: GTP 3',8-cyclase (332 aa).

The region spanning 7–221 is the Radical SAM core domain; it reads SYDRLHDYVR…FDTCKDNGLA (215 aa). Arg-16 is a GTP binding site. [4Fe-4S] cluster-binding residues include Cys-23 and Cys-27. Tyr-29 lines the S-adenosyl-L-methionine pocket. Cys-30 provides a ligand contact to [4Fe-4S] cluster. Arg-66 serves as a coordination point for GTP. Gly-70 contacts S-adenosyl-L-methionine. Residue Thr-97 coordinates GTP. Ser-121 lines the S-adenosyl-L-methionine pocket. Residue Lys-158 participates in GTP binding. Met-192 contacts S-adenosyl-L-methionine. Residues Cys-256 and Cys-259 each coordinate [4Fe-4S] cluster. Residue 261 to 263 coordinates GTP; sequence RLR. Cys-273 provides a ligand contact to [4Fe-4S] cluster.

Belongs to the radical SAM superfamily. MoaA family. Monomer and homodimer. Requires [4Fe-4S] cluster as cofactor.

It carries out the reaction GTP + AH2 + S-adenosyl-L-methionine = (8S)-3',8-cyclo-7,8-dihydroguanosine 5'-triphosphate + 5'-deoxyadenosine + L-methionine + A + H(+). It participates in cofactor biosynthesis; molybdopterin biosynthesis. Its function is as follows. Catalyzes the cyclization of GTP to (8S)-3',8-cyclo-7,8-dihydroguanosine 5'-triphosphate. The chain is GTP 3',8-cyclase from Lactiplantibacillus plantarum (strain ATCC BAA-793 / NCIMB 8826 / WCFS1) (Lactobacillus plantarum).